Consider the following 328-residue polypeptide: Pleckstrin homology domain protein OPY1 (328 aa).

Residues 19–52 (NLIKKPSTSQNKTPTAQSSSGNNGAADGAPQGYH) form a disordered region. Polar residues predominate over residues 24 to 41 (PSTSQNKTPTAQSSSGNN). The tract at residues 213–328 (AEHQVCSGIL…IRKKLKAENI (116 aa)) is required for targeting to the cell membrane. One can recognise a PH domain in the interval 215 to 318 (HQVCSGILYT…WIINFKSGIL (104 aa)).

Interacts with MSS4 (via N-terminus); to negatively regulate MSS4 kinase activity.

The protein resides in the cell membrane. It is found in the cytoplasm. Functionally, binds phosphatidylinositol 4,5-bisphosphate (PtdIns(4,5)P2/PIP2) at the cell membrane. Negatively regulates the activity of phosphatidylinositol 4-phosphate 5-kinase MSS4. This Saccharomyces cerevisiae (strain ATCC 204508 / S288c) (Baker's yeast) protein is Pleckstrin homology domain protein OPY1 (OPY1).